The primary structure comprises 248 residues: uncharacterized protein (248 aa).

A signal peptide spans 1-23 (MLKKIVIGVTATAAFGIGAGALA).

The protein localises to the cell outer membrane. This is an uncharacterized protein from Coxiella burnetii (strain RSA 493 / Nine Mile phase I).